The chain runs to 307 residues: Aspartate carbamoyltransferase catalytic subunit (307 aa).

The carbamoyl phosphate site is built by Arg59 and Thr60. Residue Lys87 coordinates L-aspartate. Carbamoyl phosphate is bound by residues Arg109, His137, and Gln140. The L-aspartate site is built by Arg173 and Arg223. Residues Gly266 and Pro267 each coordinate carbamoyl phosphate.

It belongs to the aspartate/ornithine carbamoyltransferase superfamily. ATCase family. In terms of assembly, heterododecamer (2C3:3R2) of six catalytic PyrB chains organized as two trimers (C3), and six regulatory PyrI chains organized as three dimers (R2).

The catalysed reaction is carbamoyl phosphate + L-aspartate = N-carbamoyl-L-aspartate + phosphate + H(+). The protein operates within pyrimidine metabolism; UMP biosynthesis via de novo pathway; (S)-dihydroorotate from bicarbonate: step 2/3. Its function is as follows. Catalyzes the condensation of carbamoyl phosphate and aspartate to form carbamoyl aspartate and inorganic phosphate, the committed step in the de novo pyrimidine nucleotide biosynthesis pathway. The polypeptide is Aspartate carbamoyltransferase catalytic subunit (Helicobacter pylori (strain G27)).